The primary structure comprises 320 residues: Cyclin-D6-1 (320 aa).

The tract at residues 279–320 (HHRSASSESERTTTVGSAANSADAKRRCMGPPRQWGVGGPDE) is disordered.

The protein belongs to the cyclin family. Cyclin D subfamily.

This is Cyclin-D6-1 (CYCD6-1) from Oryza sativa subsp. japonica (Rice).